Reading from the N-terminus, the 133-residue chain is Phosphoribosyl-AMP cyclohydrolase (133 aa).

A Mg(2+)-binding site is contributed by D77. C78 serves as a coordination point for Zn(2+). Residues D79 and D81 each coordinate Mg(2+). C95 and C102 together coordinate Zn(2+).

It belongs to the PRA-CH family. Homodimer. It depends on Mg(2+) as a cofactor. Requires Zn(2+) as cofactor.

The protein resides in the cytoplasm. The enzyme catalyses 1-(5-phospho-beta-D-ribosyl)-5'-AMP + H2O = 1-(5-phospho-beta-D-ribosyl)-5-[(5-phospho-beta-D-ribosylamino)methylideneamino]imidazole-4-carboxamide. The protein operates within amino-acid biosynthesis; L-histidine biosynthesis; L-histidine from 5-phospho-alpha-D-ribose 1-diphosphate: step 3/9. Its function is as follows. Catalyzes the hydrolysis of the adenine ring of phosphoribosyl-AMP. The chain is Phosphoribosyl-AMP cyclohydrolase from Azotobacter chroococcum mcd 1.